The sequence spans 432 residues: Adenylosuccinate synthetase (432 aa).

Residues G13–K19 and G41–T43 contribute to the GTP site. Catalysis depends on D14, which acts as the Proton acceptor. The Mg(2+) site is built by D14 and G41. IMP-binding positions include D14–K17, N39–H42, T130, R144, Q225, T240, and R304. H42 functions as the Proton donor in the catalytic mechanism. A300–R306 provides a ligand contact to substrate. Residues R306, K332–D334, and S415–G417 contribute to the GTP site.

The protein belongs to the adenylosuccinate synthetase family. In terms of assembly, homodimer. Mg(2+) serves as cofactor.

The protein resides in the cytoplasm. The catalysed reaction is IMP + L-aspartate + GTP = N(6)-(1,2-dicarboxyethyl)-AMP + GDP + phosphate + 2 H(+). The protein operates within purine metabolism; AMP biosynthesis via de novo pathway; AMP from IMP: step 1/2. In terms of biological role, plays an important role in the de novo pathway of purine nucleotide biosynthesis. Catalyzes the first committed step in the biosynthesis of AMP from IMP. This Haemophilus influenzae (strain 86-028NP) protein is Adenylosuccinate synthetase.